The chain runs to 415 residues: Gamma-glutamyl phosphate reductase (415 aa).

The protein belongs to the gamma-glutamyl phosphate reductase family.

It localises to the cytoplasm. It catalyses the reaction L-glutamate 5-semialdehyde + phosphate + NADP(+) = L-glutamyl 5-phosphate + NADPH + H(+). Its pathway is amino-acid biosynthesis; L-proline biosynthesis; L-glutamate 5-semialdehyde from L-glutamate: step 2/2. Functionally, catalyzes the NADPH-dependent reduction of L-glutamate 5-phosphate into L-glutamate 5-semialdehyde and phosphate. The product spontaneously undergoes cyclization to form 1-pyrroline-5-carboxylate. This is Gamma-glutamyl phosphate reductase from Listeria innocua serovar 6a (strain ATCC BAA-680 / CLIP 11262).